A 194-amino-acid polypeptide reads, in one-letter code: ATP-dependent Clp protease proteolytic subunit (194 aa).

Ser-98 functions as the Nucleophile in the catalytic mechanism. The active site involves His-123.

Belongs to the peptidase S14 family. In terms of assembly, fourteen ClpP subunits assemble into 2 heptameric rings which stack back to back to give a disk-like structure with a central cavity, resembling the structure of eukaryotic proteasomes.

The protein resides in the cytoplasm. The catalysed reaction is Hydrolysis of proteins to small peptides in the presence of ATP and magnesium. alpha-casein is the usual test substrate. In the absence of ATP, only oligopeptides shorter than five residues are hydrolyzed (such as succinyl-Leu-Tyr-|-NHMec, and Leu-Tyr-Leu-|-Tyr-Trp, in which cleavage of the -Tyr-|-Leu- and -Tyr-|-Trp bonds also occurs).. Cleaves peptides in various proteins in a process that requires ATP hydrolysis. Has a chymotrypsin-like activity. Plays a major role in the degradation of misfolded proteins. The chain is ATP-dependent Clp protease proteolytic subunit from Clostridium kluyveri (strain NBRC 12016).